The primary structure comprises 403 residues: MMKYDHILVRYGEMTTKGKNRSKFVSTLKDNVKFKLKKFPNIKINATHDRMYIELNGEDHEAIAESLKDVFGIHKFNLAMKVPSELEEIKKGALAAFLLIKKPVKTFKITVHRSYKHFPMQTMELLPEIGGYVLENTEDIMVDVHNPDVNIRIEIRSGYSYIMCDERMGAGGLPVGVGGKVMVLLSGGIDSPVAAYLTMKRGVSVEAVHFHSPPFTSERAKQKVIDLAQELTKYCKRVTLHLVPFTEVQKTINKEIPSSYTMTVMRRMMMRITERIAEERNALAITTGESLGQVASQTLDSMHTINEVTNYPVLRPLITMDKLEIIKIANEIGTYDISIRPYEDCCTVFTPANPATKPKREKASRFEAKYDFTPLLEQAVANTETMVLQTVDKAEEDQFEDLF.

Positions 61 to 166 (EAIAESLKDV…SGYSYIMCDE (106 aa)) constitute a THUMP domain. ATP is bound by residues 184–185 (LL), 209–210 (HF), Arg266, Gly288, and Gln297.

This sequence belongs to the ThiI family.

The protein resides in the cytoplasm. It carries out the reaction [ThiI sulfur-carrier protein]-S-sulfanyl-L-cysteine + a uridine in tRNA + 2 reduced [2Fe-2S]-[ferredoxin] + ATP + H(+) = [ThiI sulfur-carrier protein]-L-cysteine + a 4-thiouridine in tRNA + 2 oxidized [2Fe-2S]-[ferredoxin] + AMP + diphosphate. The enzyme catalyses [ThiS sulfur-carrier protein]-C-terminal Gly-Gly-AMP + S-sulfanyl-L-cysteinyl-[cysteine desulfurase] + AH2 = [ThiS sulfur-carrier protein]-C-terminal-Gly-aminoethanethioate + L-cysteinyl-[cysteine desulfurase] + A + AMP + 2 H(+). It participates in cofactor biosynthesis; thiamine diphosphate biosynthesis. Functionally, catalyzes the ATP-dependent transfer of a sulfur to tRNA to produce 4-thiouridine in position 8 of tRNAs, which functions as a near-UV photosensor. Also catalyzes the transfer of sulfur to the sulfur carrier protein ThiS, forming ThiS-thiocarboxylate. This is a step in the synthesis of thiazole, in the thiamine biosynthesis pathway. The sulfur is donated as persulfide by IscS. The polypeptide is Probable tRNA sulfurtransferase (Bacillus cytotoxicus (strain DSM 22905 / CIP 110041 / 391-98 / NVH 391-98)).